A 287-amino-acid polypeptide reads, in one-letter code: Pyridoxal 5'-phosphate synthase subunit PdxS (287 aa).

Aspartate 21 lines the D-ribose 5-phosphate pocket. The Schiff-base intermediate with D-ribose 5-phosphate role is filled by lysine 78. Residue glycine 150 coordinates D-ribose 5-phosphate. Arginine 162 is a D-glyceraldehyde 3-phosphate binding site. D-ribose 5-phosphate is bound by residues glycine 211 and 232-233; that span reads GS.

Belongs to the PdxS/SNZ family. As to quaternary structure, in the presence of PdxT, forms a dodecamer of heterodimers.

It catalyses the reaction aldehydo-D-ribose 5-phosphate + D-glyceraldehyde 3-phosphate + L-glutamine = pyridoxal 5'-phosphate + L-glutamate + phosphate + 3 H2O + H(+). It functions in the pathway cofactor biosynthesis; pyridoxal 5'-phosphate biosynthesis. Functionally, catalyzes the formation of pyridoxal 5'-phosphate from ribose 5-phosphate (RBP), glyceraldehyde 3-phosphate (G3P) and ammonia. The ammonia is provided by the PdxT subunit. Can also use ribulose 5-phosphate and dihydroxyacetone phosphate as substrates, resulting from enzyme-catalyzed isomerization of RBP and G3P, respectively. This is Pyridoxal 5'-phosphate synthase subunit PdxS from Tropheryma whipplei (strain Twist) (Whipple's bacillus).